Reading from the N-terminus, the 478-residue chain is NADH-quinone oxidoreductase subunit N (478 aa).

14 helical membrane-spanning segments follow: residues 5 to 25 (LASP…VGVA), 37 to 57 (MLTL…ALGL), 68 to 88 (FAVM…VLSL), 99 to 119 (FEFP…VSAS), 121 to 141 (FMTL…LAAF), 156 to 176 (FVLG…IYGF), 199 to 219 (LTVG…AAPF), 231 to 251 (PTPV…AMML), 268 to 288 (VVAL…IGQT), 293 to 313 (LMAY…AAGS), 320 to 340 (LLIY…CILA), 365 to 385 (ALLL…SGFF), 401 to 421 (LLWG…YYYL), and 446 to 466 (VVAV…APIL).

This sequence belongs to the complex I subunit 2 family. In terms of assembly, NDH-1 is composed of 14 different subunits. Subunits NuoA, H, J, K, L, M, N constitute the membrane sector of the complex.

It is found in the cell inner membrane. The catalysed reaction is a quinone + NADH + 5 H(+)(in) = a quinol + NAD(+) + 4 H(+)(out). In terms of biological role, NDH-1 shuttles electrons from NADH, via FMN and iron-sulfur (Fe-S) centers, to quinones in the respiratory chain. The immediate electron acceptor for the enzyme in this species is believed to be ubiquinone. Couples the redox reaction to proton translocation (for every two electrons transferred, four hydrogen ions are translocated across the cytoplasmic membrane), and thus conserves the redox energy in a proton gradient. In Granulibacter bethesdensis (strain ATCC BAA-1260 / CGDNIH1), this protein is NADH-quinone oxidoreductase subunit N.